Consider the following 491-residue polypeptide: Glutamyl-tRNA(Gln) amidotransferase subunit A (491 aa).

Catalysis depends on charge relay system residues K80 and S155. The Acyl-ester intermediate role is filled by S179.

Belongs to the amidase family. GatA subfamily. In terms of assembly, heterotrimer of A, B and C subunits.

It catalyses the reaction L-glutamyl-tRNA(Gln) + L-glutamine + ATP + H2O = L-glutaminyl-tRNA(Gln) + L-glutamate + ADP + phosphate + H(+). In terms of biological role, allows the formation of correctly charged Gln-tRNA(Gln) through the transamidation of misacylated Glu-tRNA(Gln) in organisms which lack glutaminyl-tRNA synthetase. The reaction takes place in the presence of glutamine and ATP through an activated gamma-phospho-Glu-tRNA(Gln). The chain is Glutamyl-tRNA(Gln) amidotransferase subunit A from Salinispora tropica (strain ATCC BAA-916 / DSM 44818 / JCM 13857 / NBRC 105044 / CNB-440).